The chain runs to 837 residues: SLIT and NTRK-like protein 4 (837 aa).

A signal peptide spans 1–18 (MFLWLFLIVSALISSTNA). At 19 to 618 (DSDISVEICN…SPPGGPVPLS (600 aa)) the chain is on the extracellular side. LRR repeat units follow at residues 60–81 (NFYH…TFVN), 84–105 (HAVS…AFLG), 108–129 (ALKQ…TFLG), 132–153 (NLEY…AFNK), 156–177 (KLKV…IFRF), and 179–200 (SLTH…GVLE). N-linked (GlcNAc...) asparagine glycosylation occurs at Asn81. Positions 213–264 (NPWNCSCDLLPLKAWLENMPYNIYIGEAICETPSDLYGRLLKETNKQELCPM) constitute an LRRCT 1 domain. Asn325 is a glycosylation site (N-linked (GlcNAc...) asparagine). An LRRNT domain is found at 333 to 375 (QTRVPPLTPCPVPCFCKTHPSDLGLSVNCQEKNIQSMSELTPK). LRR repeat units follow at residues 378-399 (NAKK…DFTE), 402-423 (GLDL…VFHN), 426-447 (NLRR…IFSG), 450-471 (NLQY…TFDS), 474-495 (NLQL…IFSG), and 497-518 (PLAR…GVLD). Residue Asn423 is glycosylated (N-linked (GlcNAc...) asparagine). An LRRCT 2 domain is found at 531–582 (NPWDCTCDLVALKLWLEKLNDGIVVKELKCETPVQFANIELKSLKNEILCPK). A helical transmembrane segment spans residues 619–639 (ILILSILVVLILTVFVAFCLL). Residues 640-837 (VFVLRRNKKP…LEEQTALNKI (198 aa)) are Cytoplasmic-facing.

It belongs to the SLITRK family. In terms of assembly, interacts (via LRR 1 and 2 repeats) with PTPRD (via extracellular domain). In terms of tissue distribution, in the adult, significant expression is detected only in the brain. Broadly expressed in embryonic brain with highest expression in subventricular zone, subplate, cortical plate, pyramidal cell layer of hippocampus, thalamus and hypothalamus.

The protein localises to the membrane. It is found in the cell membrane. It is involved in synaptogenesis and promotes synapse differentiation. Suppresses neurite outgrowth. This is SLIT and NTRK-like protein 4 (Slitrk4) from Mus musculus (Mouse).